Reading from the N-terminus, the 384-residue chain is Adaptive-response sensory kinase SasA (384 aa).

Residues 162 to 384 (MLAHDLRSPL…SFHFTLPVYR (223 aa)) enclose the Histidine kinase domain. His-165 carries the phosphohistidine; by autocatalysis modification.

In terms of assembly, homooligomerizes. Interacts with KaiC. Participates in the KaiABC clock complex, whose core is composed of a KaiC homohexamer, 6 KaiB and up to 6 KaiA dimers. SasA and KaiB(fs) compete to bind to KaiC.

The catalysed reaction is ATP + protein L-histidine = ADP + protein N-phospho-L-histidine.. Member of the two-component regulatory system SasA/RpaA involved in genome-wide circadian gene expression. One of several clock output pathways. Participates in the Kai clock protein complex, the main circadian regulator in cyanobacteria, via its interaction with KaiC. KaiC enhances the autophosphorylation activity of SasA, which then transfers its phosphate group to RpaA to activate it. In addition to its output function, recruits fold-shifted KaiB (KaiB(fs)) to KaiC to cooperatively form the KaiB(6):KaiC(6) complex (independent of SasA kinase activity). Required for robustness of the circadian rhythm of gene expression and is involved in clock output, also required for adaptation to light/dark cycles. The polypeptide is Adaptive-response sensory kinase SasA (Microcystis aeruginosa (strain NIES-843 / IAM M-2473)).